Consider the following 55-residue polypeptide: uncharacterized protein (55 aa).

The helical transmembrane segment at 27 to 44 threads the bilayer; it reads SFWFILISASSFLIYSLF.

It localises to the membrane. This is an uncharacterized protein from Dictyostelium discoideum (Social amoeba).